The sequence spans 317 residues: MSFAPNASHSPVFLLLGFSRANISYTLLFFLFLAIYLTTILGNVTLVLLISWDSRLHSPMYYLLRGLSVIDMGLSTVTLPQLLAHLVSHYPTIPAARCLAQFFFFYAFGVTDTLVIAVMALDRYVAICDPLHYALVMNHQRCACLLALSWVVSILHTMLRVGLVLPLCWTGDAGGNVNLPHFFCDHRPLLRASCSDIHSNELAIFFEGGFLMLGPCALIVLSYVRIGAAILRLPSAAGRRRAVSTCGSHLTMVGFLYGTIICVYFQPPFQNSQYQDMVASVMYTAITPLANPFVYSLHNKDVKGALCRLLEWVKVDP.

Residues 1-29 (MSFAPNASHSPVFLLLGFSRANISYTLLF) lie on the Extracellular side of the membrane. Asn-6 and Asn-22 each carry an N-linked (GlcNAc...) asparagine glycan. The helical transmembrane segment at 30–50 (FLFLAIYLTTILGNVTLVLLI) threads the bilayer. Residues 51-66 (SWDSRLHSPMYYLLRG) are Cytoplasmic-facing. Residues 67-87 (LSVIDMGLSTVTLPQLLAHLV) traverse the membrane as a helical segment. Residues 88 to 98 (SHYPTIPAARC) lie on the Extracellular side of the membrane. Cysteines 98 and 184 form a disulfide. The helical transmembrane segment at 99–119 (LAQFFFFYAFGVTDTLVIAVM) threads the bilayer. Residues 120–144 (ALDRYVAICDPLHYALVMNHQRCAC) lie on the Cytoplasmic side of the membrane. The chain crosses the membrane as a helical span at residues 145-165 (LLALSWVVSILHTMLRVGLVL). Over 166 to 201 (PLCWTGDAGGNVNLPHFFCDHRPLLRASCSDIHSNE) the chain is Extracellular. The chain crosses the membrane as a helical span at residues 202-222 (LAIFFEGGFLMLGPCALIVLS). Residues 223–248 (YVRIGAAILRLPSAAGRRRAVSTCGS) are Cytoplasmic-facing. A helical membrane pass occupies residues 249–269 (HLTMVGFLYGTIICVYFQPPF). Residues 270-276 (QNSQYQD) are Extracellular-facing. The helical transmembrane segment at 277–297 (MVASVMYTAITPLANPFVYSL) threads the bilayer. At 298–317 (HNKDVKGALCRLLEWVKVDP) the chain is on the cytoplasmic side.

This sequence belongs to the G-protein coupled receptor 1 family.

Its subcellular location is the cell membrane. Functionally, odorant receptor. This is Olfactory receptor 1B1 (OR1B1) from Homo sapiens (Human).